We begin with the raw amino-acid sequence, 476 residues long: Cysteine--tRNA ligase (476 aa).

Cysteine 28 is a binding site for Zn(2+). The 'HIGH' region signature appears at 30–40; that stretch reads PTVYDHTHLGH. Residues cysteine 208, histidine 233, and glutamate 237 each contribute to the Zn(2+) site. Positions 265-269 match the 'KMSKS' region motif; the sequence is KMSKS. Residue lysine 268 coordinates ATP.

The protein belongs to the class-I aminoacyl-tRNA synthetase family. Requires Zn(2+) as cofactor.

It localises to the cytoplasm. It catalyses the reaction tRNA(Cys) + L-cysteine + ATP = L-cysteinyl-tRNA(Cys) + AMP + diphosphate. This chain is Cysteine--tRNA ligase, found in Methanococcus maripaludis (strain C7 / ATCC BAA-1331).